Consider the following 340-residue polypeptide: Fructose-1,6-bisphosphatase, cytosolic (340 aa).

Mg(2+) is bound by residues glutamate 71, glutamate 100, aspartate 121, leucine 123, and aspartate 124. Residues 124 to 127 (DGSS), asparagine 215, tyrosine 247, tyrosine 267, and lysine 277 each bind substrate. Mg(2+) is bound at residue glutamate 283.

The protein belongs to the FBPase class 1 family. It depends on Mg(2+) as a cofactor.

It is found in the cytoplasm. The catalysed reaction is beta-D-fructose 1,6-bisphosphate + H2O = beta-D-fructose 6-phosphate + phosphate. In Solanum tuberosum (Potato), this protein is Fructose-1,6-bisphosphatase, cytosolic.